We begin with the raw amino-acid sequence, 1184 residues long: C5a peptidase (1184 aa).

An N-terminal signal peptide occupies residues 1–31 (MRKKQKLPFDKLAIALMSTSILLNAQSDIKA). Composition is skewed to polar residues over residues 33-52 (TVTE…QPTA) and 89-100 (AKTTDTPATSKA). Residues 33–117 (TVTEDTPATE…PSQVKTLQEK (85 aa)) are disordered. Residues 99 to 581 (KATIRDLNDP…AGAVDAKKAS (483 aa)) form the Peptidase S8 domain. Active-site charge relay system residues include aspartate 130, histidine 193, and serine 512. Basic and acidic residues-rich tracts occupy residues 1029 to 1054 (EGHS…KPEQ), 1061 to 1071 (PDKKPETKPEQ), 1078 to 1088 (PDKKPEAKPEQ), and 1095 to 1107 (PDKK…EKDS). Positions 1029–1150 (EGHSNKPEQD…RDQLPTTNDK (122 aa)) are disordered. Tandem repeats lie at residues 1034–1067 (KPEQ…KPET), 1068–1084 (KPEQ…KPEA), 1085–1101 (KPEQ…KPET), and 1102–1118 (KPEK…TPQK). Residues 1034–1118 (KPEQDGSDQV…GQTPGKTPQK (85 aa)) are 4 X 17 AA tandem repeats. Over residues 1109–1123 (GQTPGKTPQKGQPSR) the composition is skewed to polar residues. The LPXTG sorting signal signature appears at 1144–1148 (LPTTN). A Pentaglycyl murein peptidoglycan amidated threonine modification is found at threonine 1147. Residues 1148 to 1184 (NDKDTNRLHLLKLVMTTFFFGLVAHIFKTKRQKETKK) constitute a propeptide, removed by sortase.

This sequence belongs to the peptidase S8 family. Post-translationally, cleaved by SpeB protease; leading to its degradation. Degradation by SpeB is probably strictly regulated to preserve integrity of C5a peptidase.

The protein localises to the secreted. Its subcellular location is the cell wall. It carries out the reaction The primary cleavage site is at 67-His-|-Lys-68 in human C5a with a minor secondary cleavage site at 58-Ala-|-Ser-59.. In terms of biological role, this virulence factor of S.pyogenes specifically cleaves the human serum chemotaxin C5a at '68-Lys-|-Asp-69' bond near its C-terminus, destroying its ability to serve as a chemoattractant. This is C5a peptidase (scpA) from Streptococcus pyogenes serotype M6 (strain ATCC BAA-946 / MGAS10394).